Here is a 205-residue protein sequence, read N- to C-terminus: Rho GDP-dissociation inhibitor (205 aa).

Residues 1–11 (MSVNNEVSADQ) are compositionally biased toward polar residues. The disordered stretch occupies residues 1 to 31 (MSVNNEVSADQHNPELEDDTFEHGPPVSLGE). Phosphoserine is present on serine 63.

It belongs to the Rho GDI family.

It localises to the cytoplasm. Its subcellular location is the nucleus. Regulates the GDP/GTP exchange reaction of the Rho proteins by inhibiting the dissociation of GDP from them, and the subsequent binding of GTP to them. This chain is Rho GDP-dissociation inhibitor, found in Schizosaccharomyces pombe (strain 972 / ATCC 24843) (Fission yeast).